The sequence spans 483 residues: NADH-quinone oxidoreductase subunit N (483 aa).

The next 13 helical transmembrane spans lie at Ala-11–Leu-31, Ser-37–Thr-57, Leu-82–Ser-100, Phe-110–Leu-130, Phe-164–Val-184, Ala-205–Val-225, Pro-239–Ile-259, Val-268–Gly-288, Met-301–Gly-321, Met-329–Leu-349, Tyr-372–Phe-392, Gly-406–Leu-426, and Pro-446–Phe-466.

This sequence belongs to the complex I subunit 2 family. As to quaternary structure, NDH-1 is composed of 14 different subunits. Subunits NuoA, H, J, K, L, M, N constitute the membrane sector of the complex.

The protein localises to the cell inner membrane. It catalyses the reaction a quinone + NADH + 5 H(+)(in) = a quinol + NAD(+) + 4 H(+)(out). Its function is as follows. NDH-1 shuttles electrons from NADH, via FMN and iron-sulfur (Fe-S) centers, to quinones in the respiratory chain. The immediate electron acceptor for the enzyme in this species is believed to be ubiquinone. Couples the redox reaction to proton translocation (for every two electrons transferred, four hydrogen ions are translocated across the cytoplasmic membrane), and thus conserves the redox energy in a proton gradient. This chain is NADH-quinone oxidoreductase subunit N, found in Methylovorus glucosotrophus (strain SIP3-4).